The primary structure comprises 238 residues: Lipoprotein-releasing system ATP-binding protein LolD (238 aa).

An ABC transporter domain is found at 6–238; it reads LVCQGIRKVY…RSSLAQEMEA (233 aa). 42 to 49 is a binding site for ATP; that stretch reads GSSGSGKS.

It belongs to the ABC transporter superfamily. Lipoprotein translocase (TC 3.A.1.125) family. As to quaternary structure, the complex is composed of two ATP-binding proteins (LolD) and two transmembrane proteins (LolC and LolE).

Its subcellular location is the cell inner membrane. Part of the ABC transporter complex LolCDE involved in the translocation of mature outer membrane-directed lipoproteins, from the inner membrane to the periplasmic chaperone, LolA. Responsible for the formation of the LolA-lipoprotein complex in an ATP-dependent manner. The chain is Lipoprotein-releasing system ATP-binding protein LolD from Aliivibrio fischeri (strain ATCC 700601 / ES114) (Vibrio fischeri).